Consider the following 159-residue polypeptide: SsrA-binding protein (159 aa).

Residues 134-159 (KLHDKRETSKERDWNRQKNRLLKERG) form a disordered region. The span at 137-159 (DKRETSKERDWNRQKNRLLKERG) shows a compositional bias: basic and acidic residues.

This sequence belongs to the SmpB family.

The protein resides in the cytoplasm. Its function is as follows. Required for rescue of stalled ribosomes mediated by trans-translation. Binds to transfer-messenger RNA (tmRNA), required for stable association of tmRNA with ribosomes. tmRNA and SmpB together mimic tRNA shape, replacing the anticodon stem-loop with SmpB. tmRNA is encoded by the ssrA gene; the 2 termini fold to resemble tRNA(Ala) and it encodes a 'tag peptide', a short internal open reading frame. During trans-translation Ala-aminoacylated tmRNA acts like a tRNA, entering the A-site of stalled ribosomes, displacing the stalled mRNA. The ribosome then switches to translate the ORF on the tmRNA; the nascent peptide is terminated with the 'tag peptide' encoded by the tmRNA and targeted for degradation. The ribosome is freed to recommence translation, which seems to be the essential function of trans-translation. This is SsrA-binding protein from Sinorhizobium fredii (strain NBRC 101917 / NGR234).